A 454-amino-acid polypeptide reads, in one-letter code: MDPYMIQMSSKGNLPSILDVHVNVGGRSSVPGKMKGRKARWSVRPSDMAKKTFNPIRAIVDNMKVKPNPNKTMISLSIGDPTVFGNLPTDPEVTQAMKDALDSGKYNGYAPSIGFLSSREEIASYYHCPEAPLEAKDVILTSGCSQAIDLCLAVLANPGQNILVPRPGFSLYKTLAESMGIEVKLYNLLPEKSWEIDLKQLEYLIDEKTACLIVNNPSNPCGSVFSKRHLQKILAVAARQCVPILADEIYGDMVFSDCKYEPLATLSTDVPILSCGGLAKRWLVPGWRLGWILIHDRRDIFGNEIRDGLVKLSQRILGPCTIVQGALKSILCRTPGEFYHNTLSFLKSNADLCYGALAAIPGLRPVRPSGAMYLMVGIEMEHFPEFENDVEFTERLVAEQSVHCLPATCFEYPNFIRVVITVPEVMMLEACSRIQEFCEQHYHCAEGSQEECDK.

N-acetylmethionine is present on Met-1. Position 280 is an N6-(pyridoxal phosphate)lysine (Lys-280). Ser-448 bears the Phosphoserine mark.

It belongs to the class-I pyridoxal-phosphate-dependent aminotransferase family. In terms of assembly, homodimer. Requires pyridoxal 5'-phosphate as cofactor.

It catalyses the reaction L-tyrosine + 2-oxoglutarate = 3-(4-hydroxyphenyl)pyruvate + L-glutamate. It functions in the pathway amino-acid degradation; L-phenylalanine degradation; acetoacetate and fumarate from L-phenylalanine: step 2/6. Its function is as follows. Transaminase involved in tyrosine breakdown. Converts tyrosine to p-hydroxyphenylpyruvate. Can catalyze the reverse reaction, using glutamic acid, with 2-oxoglutarate as cosubstrate (in vitro). Has much lower affinity and transaminase activity towards phenylalanine. The protein is Tyrosine aminotransferase (TAT) of Homo sapiens (Human).